A 496-amino-acid polypeptide reads, in one-letter code: Probable zinc metalloprotease SNOG_06590 (496 aa).

A signal peptide spans methionine 1 to serine 20. Asparagine 138 carries an N-linked (GlcNAc...) asparagine glycan. Zn(2+) contacts are provided by histidine 161, aspartate 181, and glutamate 226. Asparagine 241 is a glycosylation site (N-linked (GlcNAc...) asparagine). Residue aspartate 253 coordinates Zn(2+). Residues asparagine 282, asparagine 361, asparagine 409, asparagine 415, and asparagine 457 are each glycosylated (N-linked (GlcNAc...) asparagine). One can recognise a Fibronectin type-III domain in the interval glutamate 402–cysteine 496.

Belongs to the peptidase M28 family. M28B subfamily. Zn(2+) is required as a cofactor.

The protein resides in the secreted. The chain is Probable zinc metalloprotease SNOG_06590 from Phaeosphaeria nodorum (strain SN15 / ATCC MYA-4574 / FGSC 10173) (Glume blotch fungus).